The sequence spans 387 residues: MNRWLLPEDIADVLPAQARKVETLRRAILDLYQSYGYELVAPPILEFLDSLLTGTGSDLNLQTFKLVDQLSGRTLGLRADITPQVARIDAHLLNRAGVTRLCYAGSVAQALTPVGGSSREQLQLGAEIYGCANGEADFEAITLLLKTLDLAGLKKVYLDLSHAGILTGILEGQQLDKESIETLYGLLQSKDRPRLRQWATCLPAKLAADLLALTELNGPCTEVIANAKKVLPRHAAVDQALADLECVVSAASKSLSGVELSIDLADLRGYQYHSGVMFAAYVDGLPQPIARGGRYDQVGKAFGRSRPATGFSLDLLTLAGLSPLNCRKLAVLAPWIDDADLNQVIADLRNRGEVVIQVLPGEVLEAAEYECDRELVKQGNSWELKKK.

This sequence belongs to the class-II aminoacyl-tRNA synthetase family. HisZ subfamily. In terms of assembly, heteromultimer composed of HisG and HisZ subunits.

The protein localises to the cytoplasm. It functions in the pathway amino-acid biosynthesis; L-histidine biosynthesis; L-histidine from 5-phospho-alpha-D-ribose 1-diphosphate: step 1/9. Required for the first step of histidine biosynthesis. May allow the feedback regulation of ATP phosphoribosyltransferase activity by histidine. This is ATP phosphoribosyltransferase regulatory subunit from Polynucleobacter asymbioticus (strain DSM 18221 / CIP 109841 / QLW-P1DMWA-1) (Polynucleobacter necessarius subsp. asymbioticus).